Consider the following 318-residue polypeptide: Cytochrome f (318 aa).

Residues 1 to 34 (MKNNYLANLIKTLQAIVVSVALLAPLVLPSAVNA) form the signal peptide. 4 residues coordinate heme: F35, C55, C58, and H59. The helical transmembrane segment at 284-304 (VKGLIAFFFTVILAQILLVLK) threads the bilayer.

Belongs to the cytochrome f family. As to quaternary structure, the 4 large subunits of the cytochrome b6-f complex are cytochrome b6, subunit IV (17 kDa polypeptide, petD), cytochrome f and the Rieske protein, while the 4 small subunits are PetG, PetL, PetM and PetN. The complex functions as a dimer. Heme is required as a cofactor.

The protein resides in the plastid. Its subcellular location is the chloroplast thylakoid membrane. In terms of biological role, component of the cytochrome b6-f complex, which mediates electron transfer between photosystem II (PSII) and photosystem I (PSI), cyclic electron flow around PSI, and state transitions. This is Cytochrome f from Rhodomonas salina (Cryptomonas salina).